Reading from the N-terminus, the 405-residue chain is L-carnitine CoA-transferase (405 aa).

The CoA site is built by Lys97 and Arg104. Catalysis depends on Asp169, which acts as the Nucleophile.

The protein belongs to the CoA-transferase III family. CaiB subfamily. As to quaternary structure, homodimer.

The protein resides in the cytoplasm. The enzyme catalyses crotonobetainyl-CoA + (R)-carnitine = crotonobetaine + (R)-carnitinyl-CoA. The catalysed reaction is 4-(trimethylamino)butanoyl-CoA + (R)-carnitine = (R)-carnitinyl-CoA + 4-(trimethylamino)butanoate. It functions in the pathway amine and polyamine metabolism; carnitine metabolism. Functionally, catalyzes the reversible transfer of the CoA moiety from gamma-butyrobetainyl-CoA to L-carnitine to generate L-carnitinyl-CoA and gamma-butyrobetaine. Is also able to catalyze the reversible transfer of the CoA moiety from gamma-butyrobetainyl-CoA or L-carnitinyl-CoA to crotonobetaine to generate crotonobetainyl-CoA. The sequence is that of L-carnitine CoA-transferase from Escherichia coli O139:H28 (strain E24377A / ETEC).